Here is a 987-residue protein sequence, read N- to C-terminus: Probable outer membrane protein PmpG (987 aa).

The signal sequence occupies residues 1–25 (MMQTPFHKFFLLAMLSYSLLQGGHA). One can recognise an Autotransporter domain in the interval 707–987 (GRAYCRGIWI…GLSIGSKIRF (281 aa)).

It belongs to the PMP outer membrane protein family.

Its subcellular location is the secreted. It localises to the cell wall. It is found in the cell outer membrane. The polypeptide is Probable outer membrane protein PmpG (pmpG) (Chlamydia muridarum (strain MoPn / Nigg)).